The chain runs to 356 residues: Caspase activity and apoptosis inhibitor 1 (356 aa).

Over residues 1–14 (MTGKKSSREKRRKR) the composition is skewed to basic residues. Disordered stretches follow at residues 1 to 24 (MTGKKSSREKRRKRSGQEAAASLA) and 54 to 80 (VAGGAERSERRKRRSTDSSSSVSGSLQ). Ser68 is modified (phosphoserine). At Thr69 the chain carries Phosphothreonine. Lys84 participates in a covalent cross-link: Glycyl lysine isopeptide (Lys-Gly) (interchain with G-Cter in SUMO2). Residues Ser100 and Ser183 each carry the phosphoserine modification. Residues 208–234 (DSTSSLRENKQPEVLESKQGKGEDSDV) form a disordered region. Positions 214-231 (RENKQPEVLESKQGKGED) are enriched in basic and acidic residues. Residues 276 to 306 (ENTVQSEAGQIDDLERDIEKSVNEILGLAES) are a coiled coil. Ser307 is subject to Phosphoserine.

In terms of biological role, anti-apoptotic protein that modulates a caspase-10 dependent mitochondrial caspase-3/9 feedback amplification loop. The polypeptide is Caspase activity and apoptosis inhibitor 1 (Caap1) (Mus musculus (Mouse)).